Reading from the N-terminus, the 293-residue chain is Nucleotide-binding protein BCG9842_B5683 (293 aa).

14–21 (GMSGAGKT) lines the ATP pocket. 65–68 (DLRG) lines the GTP pocket.

It belongs to the RapZ-like family.

Functionally, displays ATPase and GTPase activities. This is Nucleotide-binding protein BCG9842_B5683 from Bacillus cereus (strain G9842).